The following is a 287-amino-acid chain: Large ribosomal subunit protein uL5m (287 aa).

The N-terminal 18 residues, methionine 1–arginine 18, are a transit peptide targeting the mitochondrion. A compositionally biased stretch (basic and acidic residues) spans aspartate 80–proline 89. Residues aspartate 80–asparagine 109 are disordered.

This sequence belongs to the universal ribosomal protein uL5 family. As to quaternary structure, component of the mitochondrial large ribosomal subunit (mt-LSU). Mature yeast 74S mitochondrial ribosomes consist of a small (37S) and a large (54S) subunit. The 37S small subunit contains a 15S ribosomal RNA (15S mt-rRNA) and at least 32 different proteins. The 54S large subunit contains a 21S rRNA (21S mt-rRNA) and at least 45 different proteins. Unlike bacterial L5, uL5m does not bind zinc.

The protein localises to the mitochondrion. Component of the mitochondrial ribosome (mitoribosome), a dedicated translation machinery responsible for the synthesis of mitochondrial genome-encoded proteins, including at least some of the essential transmembrane subunits of the mitochondrial respiratory chain. The mitoribosomes are attached to the mitochondrial inner membrane and translation products are cotranslationally integrated into the membrane. The polypeptide is Large ribosomal subunit protein uL5m (mrpl7) (Schizosaccharomyces pombe (strain 972 / ATCC 24843) (Fission yeast)).